The chain runs to 590 residues: MSGDYEDDLCRRALILVSDLCARVRDADTNDRCQEFNDRIRGYPRGPDADISVSLLSVIVTFCGIVLLGVSLFVSWKLCWVPWRDKGGSAVGGGPLRKDLGPGVGLAGLVGGGGHHLAAGLGGHPLLGGPHHHAHAAHHPPFAELLEPGSLGGSDTPEPSYLDMDSYPEAAAAAVAAGVKPSQTSPELPSEGGAGSGLLLLPPSGGGLPSAQSHQQVTSLAPTTRYPALPRPLTQQTLTSQPDPSSEERPPALPLPLPGGEEKAKLIGQIKPELYQGTGPGGRRSGGGPGSGEAGTGAPCGRISFALRYLYGSDQLVVRILQALDLPAKDSNGFSDPYVKIYLLPDRKKKFQTKVHRKTLNPVFNETFQFSVPLAELAQRKLHFSVYDFDRFSRHDLIGQVVLDNLLELAEQPPDRPLWRDIVEGGSEKADLGELNFSLCYLPTAGRLTVTIIKASNLKAMDLTGFSDPYVKASLISEGRRLKKRKTSIKKNTLNPTYNEALVFDVAPESVENVGLSIAVVDYDCIGHNEVIGVCRVGPDAADPHGREHWAEMLANPRKPVEHWHQLVEEKTVTSFTKGSKGLSEKENSE.

Residues 1–54 (MSGDYEDDLCRRALILVSDLCARVRDADTNDRCQEFNDRIRGYPRGPDADISVS) lie on the Vesicular side of the membrane. The cysteine motif stretch occupies residues 10 to 34 (CRRALILVSDLCARVRDADTNDRCQ). The chain crosses the membrane as a helical span at residues 55–75 (LLSVIVTFCGIVLLGVSLFVS). The Cytoplasmic portion of the chain corresponds to 76–590 (WKLCWVPWRD…KGLSEKENSE (515 aa)). Disordered regions lie at residues 143–220 (AELL…VTSL), 234–260 (TQQT…LPGG), and 273–295 (ELYQ…GEAG). Over residues 185 to 203 (SPELPSEGGAGSGLLLLPP) the composition is skewed to low complexity. Residues 234-243 (TQQTLTSQPD) show a composition bias toward polar residues. Gly residues predominate over residues 278–295 (TGPGGRRSGGGPGSGEAG). At R284 the chain carries Omega-N-methylarginine. C2 domains lie at 299–420 (PCGR…PLWR) and 431–565 (DLGE…EHWH). 11 residues coordinate Ca(2+): D330, D336, D388, F389, D390, S393, D396, D462, D468, D522, and D524.

Belongs to the synaptotagmin family. Homodimer; disulfide-linked via the cysteine motif. Can also form heterodimers with SYT6, SYT9 and SYT10. Ca(2+) serves as cofactor. In terms of tissue distribution, expressed in melanocytes.

The protein resides in the cell membrane. The protein localises to the cytoplasmic vesicle. Its subcellular location is the secretory vesicle membrane. Its function is as follows. Ca(2+) sensor involved in Ca(2+)-dependent exocytosis of secretory vesicles through Ca(2+) and phospholipid binding to the C2 domain. Ca(2+) induces binding of the C2-domains to phospholipid membranes and to assembled SNARE-complexes; both actions contribute to triggering exocytosis. Plays a role in dendrite formation by melanocytes. This chain is Synaptotagmin-3 (SYT3), found in Homo sapiens (Human).